The chain runs to 382 residues: Alkanesulfonate monooxygenase (382 aa).

This sequence belongs to the SsuD family. Homotetramer.

It catalyses the reaction an alkanesulfonate + FMNH2 + O2 = an aldehyde + FMN + sulfite + H2O + 2 H(+). Its function is as follows. Catalyzes the desulfonation of aliphatic sulfonates. The chain is Alkanesulfonate monooxygenase from Yersinia pestis bv. Antiqua (strain Antiqua).